The following is a 353-amino-acid chain: GTPase Obg (353 aa).

Positions Met-1–Ile-159 constitute an Obg domain. The region spanning Ala-160–Gly-327 is the OBG-type G domain. GTP-binding positions include Gly-166–Ser-173, Phe-191–His-195, Asp-212–Gly-215, Asn-279–Asp-282, and Ser-308–Ile-310. Mg(2+) contacts are provided by Ser-173 and Thr-193. A disordered region spans residues Ser-332–Ala-353.

It belongs to the TRAFAC class OBG-HflX-like GTPase superfamily. OBG GTPase family. As to quaternary structure, monomer. Mg(2+) is required as a cofactor.

The protein localises to the cytoplasm. In terms of biological role, an essential GTPase which binds GTP, GDP and possibly (p)ppGpp with moderate affinity, with high nucleotide exchange rates and a fairly low GTP hydrolysis rate. Plays a role in control of the cell cycle, stress response, ribosome biogenesis and in those bacteria that undergo differentiation, in morphogenesis control. The sequence is that of GTPase Obg from Rhodopseudomonas palustris (strain HaA2).